Reading from the N-terminus, the 2470-residue chain is Serine/threonine-protein kinase mTor (2470 aa).

HEAT repeat units lie at residues 172–209 (QHILTFFEVIFNAIFDPKPAIRESAGEALRAALIVTAQ), 746–785 (SYMNPILKALVPKLHEPESNPGVILNVLRTIGDLAEVNGG), 791–829 (LWADDLLSILLEMLGDAGSPDKRGVALWTLGQLISATGR), 835–873 (HKYPVLIDILINFLKTEQRRSIRRETIRVLGLLGAMDPY), 962–999 (PYLAQVLPNLLDNVRTADNNLREFLFQQLAILVAFVKL), 1043–1080 (DYLAELIPQILRVLQHDNSKDRMVTRRLLQALQKFGST), 1083–1122 (YYLPLILPPIVKLFDSPYVPQQVSMVALETINNLACQLDF), and 1124–1160 (DFSSRIIHPLVRVLDAEPELRDQAMTTLRSLAKQLGK). Residues 1349–1903 (LLGTRAMACR…VYPLTVASKS (555 aa)) form the FAT domain. 2 TPR repeats span residues 1407–1440 (ANELNVQGRWYEKLHNWDEALEHYERNLKTDSSD) and 1718–1751 (MATWQNKLQDSIRPDAIQGALECFEKATSYDPNW). The HEAT 9 repeat unit spans residues 1854-1891 (NTWLQVIPQLIARIDTHRQLVGQLIHQLLMDIGKNHPQ). One can recognise a PI3K/PI4K catalytic domain in the interval 2077–2389 (IKTNLQVITS…SLSNSVEDSL (313 aa)). Residues 2083 to 2089 (VITSKQR) are G-loop. Residues 2256 to 2264 (GLGDRHPSN) form a catalytic loop region. An activation loop region spans residues 2276–2301 (HIDFGDCFEVAMTREKFPEKIPFRLT). Residues 2364–2389 (AGAGAPGGRGGSGMQDSLSNSVEDSL) form a disordered region. A compositionally biased stretch (gly residues) spans 2367 to 2376 (GAPGGRGGSG). Residues 2377 to 2386 (MQDSLSNSVE) are compositionally biased toward polar residues. The FATC domain occupies 2438–2470 (KSVNEQSQVELLIQQATNNENLCQCYIGWCPFW).

Belongs to the PI3/PI4-kinase family. May be part of a minimal complex, TORC1, consisting of mTor, raptor and lst8. May be part of a minimal complex, TORC2, consisting of mTor, rictor and lst8. Self-associates; assembles into homomultimeric complexes. Component of a multiprotein complex.

It carries out the reaction L-seryl-[protein] + ATP = O-phospho-L-seryl-[protein] + ADP + H(+). The enzyme catalyses L-threonyl-[protein] + ATP = O-phospho-L-threonyl-[protein] + ADP + H(+). In terms of biological role, promotes cell and tissue growth, maintains tissue homeostatis and controls responses to environmental stress and aging. Regulates growth during animal development by coupling growth factor signaling to nutrient availability. Central regulators of autophagy. May be involved in atg1 phosphorylation. May also be involved, directly or indirectly, in the control of neuronal function. Phosphorylates S6K/p70S6K, in vitro. May regulate the activity of S6K. Overexpression inhibits growth and reduces cell size. Affects the timing of neuronal cell differentiation. Hyperactivation of the signaling leads to accelerated differentiation, whereas inhibition of the signaling retards differentiation. Thus, in addition to controlling growth of the cell in which it resides, it can also influence growth of distant cells and organs during development via a humoral mechanism. As part of the TORC1 complex regulates energy homeostasis and promotes certain aspects of larval growth by negatively regulating REPTOR. REPTOR functions downstream of TORC1 to regulate the expression of stress response genes in response to TORC1 inhibition resulting from nutrient deprivation. When TORC1 activity is high it phosphorylates REPTOR which inhibits its recruitment into the nucleus and antagonizes their function. This function is essential under normal feeding conditions to promote TORC1-dependent growth during larval development and, in adults and larvae to prevent the REPTOR-dependent expression of nutrient stress response genes. In short, during development, it primarily controls growth, whereas in the adult, where there is relatively little growth, it controls aging and other aspects of nutrient-related physiology. Rag GTPases act as activators of TORC1 in response to amino acid signals. This chain is Serine/threonine-protein kinase mTor, found in Drosophila melanogaster (Fruit fly).